The chain runs to 204 residues: CASP-like protein 1U3 (204 aa).

Residues 1 to 19 (MCEGEKKKDSSSGALYCVN) are Cytoplasmic-facing. The helical transmembrane segment at 20–40 (LALRIVVLGLAVAAAALMATA) threads the bilayer. Topologically, residues 41–63 (SQCTIFLYYGGPLHTITYKDFGP) are extracellular. The helical transmembrane segment at 64–84 (FVYLVVASSIGAFMEAIAIFL) threads the bilayer. At 85–97 (TICKKKDGTPAKV) the chain is on the cytoplasmic side. Residues 98-118 (LLPLLDAAVPVLLYSATAAAF) traverse the membrane as a helical segment. Residues 119–146 (AAGDMSYCAVGKRVGVCTTAAAGNFCNQ) lie on the Extracellular side of the membrane. The helical transmembrane segment at 147 to 167 (VHIAMYVSLAAGVALLVAEIV) threads the bilayer. Residues 168–204 (KHWPDSGKKKEGGGGGCGSDSDSDKSTPCHHGCHSKH) lie on the Cytoplasmic side of the membrane. Residues 173–204 (SGKKKEGGGGGCGSDSDSDKSTPCHHGCHSKH) form a disordered region.

The protein belongs to the Casparian strip membrane proteins (CASP) family. As to quaternary structure, homodimer and heterodimers.

It localises to the cell membrane. This chain is CASP-like protein 1U3, found in Oryza sativa subsp. japonica (Rice).